Reading from the N-terminus, the 1508-residue chain is ABC-type transporter oblD (1508 aa).

2 disordered regions span residues 1–35 (MSLG…LTNN) and 54–82 (KYTQ…PNGG). Over residues 11–24 (TPNSVMPSDASLHN) the composition is skewed to polar residues. Residues Asn24 and Asn35 are each glycosylated (N-linked (GlcNAc...) asparagine). Positions 55 to 68 (YTQNSVYSTTSQNP) are enriched in polar residues. N-linked (GlcNAc...) asparagine glycans are attached at residues Asn83, Asn231, and Asn314. The 255-residue stretch at 136–390 (LEAVGLVRKL…FLNMGFVCPD (255 aa)) folds into the ABC transporter 1 domain. 5 helical membrane passes run 501–521 (ITIS…SMFF), 536–556 (LLFF…LTLY), 610–630 (GNFF…SMFF), 643–663 (ALPF…FTIP), and 752–772 (GIIF…SDFI). The ABC transporter 2 domain occupies 828–1070 (FQWKDICYDI…ILIDYFTRNG (243 aa)). 864 to 871 (GVSGAGKT) is a binding site for ATP. A run of 4 helical transmembrane segments spans residues 1172-1192 (YIYS…FSLY), 1206-1226 (FAIF…MPHF), 1296-1316 (LFVW…IAAL), and 1322-1342 (AGNM…ILTT). A glycan (N-linked (GlcNAc...) asparagine) is linked at Asn1390. The chain crosses the membrane as a helical span at residues 1443–1463 (FGLMWVFVVFNAFAACGLYYW).

This sequence belongs to the ABC transporter superfamily. ABCG family. PDR (TC 3.A.1.205) subfamily.

It is found in the cell membrane. Its function is as follows. ABC-type transporter; part of the gene cluster that mediates the biosynthesis of the sesterterpenes ophiobolins, fungal phytotoxins with potential anti-cancer activities. Acts as a specific transporter involved in ophiobolins secretion. This chain is ABC-type transporter oblD, found in Cochliobolus heterostrophus (strain C5 / ATCC 48332 / race O) (Southern corn leaf blight fungus).